Consider the following 198-residue polypeptide: Neutrophil gelatinase-associated lipocalin (198 aa).

An N-terminal signal peptide occupies residues 1 to 20 (MPLGLLWLGLALLGALHAQA). The residue at position 21 (Q21) is a Pyrrolidone carboxylic acid. A carboxymycobactin is bound at residue 72-74 (YAT). N85 carries N-linked (GlcNAc...) asparagine glycosylation. C96 and C195 are joined by a disulfide. An enterobactin-binding site is contributed by Y126. Residues K145, K154, and Y158 each contribute to the a carboxymycobactin site. K154 is a binding site for enterobactin.

This sequence belongs to the calycin superfamily. Lipocalin family. Monomer. Homodimer; disulfide-linked. Heterodimer; disulfide-linked with MMP9. In terms of tissue distribution, detected in neutrophils (at protein level). Expressed in bone marrow and in tissues that are prone to exposure to microorganism. High expression is found in bone marrow as well as in uterus, prostate, salivary gland, stomach, appendix, colon, trachea and lung. Expressed in the medullary tubules of the kidney. Not found in the small intestine or peripheral blood leukocytes.

Its subcellular location is the secreted. It is found in the cytoplasmic granule lumen. The protein localises to the cytoplasmic vesicle lumen. Iron-trafficking protein involved in multiple processes such as apoptosis, innate immunity and renal development. Binds iron through association with 2,3-dihydroxybenzoic acid (2,3-DHBA), a siderophore that shares structural similarities with bacterial enterobactin, and delivers or removes iron from the cell, depending on the context. Iron-bound form (holo-24p3) is internalized following binding to the SLC22A17 (24p3R) receptor, leading to release of iron and subsequent increase of intracellular iron concentration. In contrast, association of the iron-free form (apo-24p3) with the SLC22A17 (24p3R) receptor is followed by association with an intracellular siderophore, iron chelation and iron transfer to the extracellular medium, thereby reducing intracellular iron concentration. Involved in apoptosis due to interleukin-3 (IL3) deprivation: iron-loaded form increases intracellular iron concentration without promoting apoptosis, while iron-free form decreases intracellular iron levels, inducing expression of the proapoptotic protein BCL2L11/BIM, resulting in apoptosis. Involved in innate immunity; limits bacterial proliferation by sequestering iron bound to microbial siderophores, such as enterobactin. Can also bind siderophores from M.tuberculosis. The sequence is that of Neutrophil gelatinase-associated lipocalin (LCN2) from Homo sapiens (Human).